The chain runs to 179 residues: Cell division protein ZapC (179 aa).

The protein belongs to the ZapC family. Interacts directly with FtsZ.

It is found in the cytoplasm. Its function is as follows. Contributes to the efficiency of the cell division process by stabilizing the polymeric form of the cell division protein FtsZ. Acts by promoting interactions between FtsZ protofilaments and suppressing the GTPase activity of FtsZ. The chain is Cell division protein ZapC from Ferrimonas balearica (strain DSM 9799 / CCM 4581 / KCTC 23876 / PAT).